Reading from the N-terminus, the 814-residue chain is Kexin (814 aa).

Residues 1-19 form the signal peptide; that stretch reads MKVRKYITLCFWWAFSTSA. Positions 20-109 are excised as a propeptide; it reads LVSSQQIPLK…LFPRNDLFKR (90 aa). Asn-42 carries N-linked (GlcNAc...) asparagine glycosylation. Residues 110-113 constitute a propeptide, removed by dipeptidylpeptidase STE13; that stretch reads LPVP. The Lumenal segment spans residues 114–678; the sequence is APPMDSSLLP…KLSSPRQAMH (565 aa). Residue Asp-135 coordinates Ca(2+). In terms of domain architecture, Peptidase S8 spans 141-453; that stretch reads QWHLVNPSFP…FGKIDAHKLI (313 aa). Residue Asn-163 is glycosylated (N-linked (GlcNAc...) asparagine). Catalysis depends on Asp-175, which acts as the Charge relay system. Ca(2+) is bound at residue Asp-184. His-213 acts as the Charge relay system in catalysis. Ca(2+) is bound by residues Asn-227, Asp-277, Asp-320, and Glu-350. Disulfide bonds link Cys-230–Cys-377 and Cys-322–Cys-352. The Charge relay system role is filled by Ser-385. N-linked (GlcNAc...) asparagine glycans are attached at residues Asn-404 and Asn-480. The P/Homo B domain occupies 462 to 596; it reads VNAQTWFYLP…RLKLFGESID (135 aa). A disordered region spans residues 651-671; that stretch reads PQTTTASTDPDSDPNTPKKLS. A compositionally biased stretch (low complexity) spans 653–667; that stretch reads TTTASTDPDSDPNTP. Residues 679 to 699 traverse the membrane as a helical segment; the sequence is YFLTIFLIGATFLVLYFMFFM. The Cytoplasmic portion of the chain corresponds to 700-814; it reads KSRRRIRRSR…PDVPPSSGRS (115 aa). Positions 756–814 are disordered; the sequence is SLSSSENGDAEHTIDSVLTNENPFSDPIKQKFPNDANAESASNKLQELQPDVPPSSGRS. Positions 792 to 801 are enriched in polar residues; that stretch reads NAESASNKLQ.

It belongs to the peptidase S8 family. Furin subfamily. Requires Ca(2+) as cofactor. Post-translationally, O-glycosylated.

Its subcellular location is the golgi apparatus. It is found in the trans-Golgi network membrane. The catalysed reaction is Cleavage of -Lys-Arg-|-Xaa- and -Arg-Arg-|-Xaa- bonds to process yeast alpha-factor pheromone and killer toxin precursors.. Processing of precursors of alpha-factors and killer toxin. The protein is Kexin (KEX2) of Saccharomyces cerevisiae (strain ATCC 204508 / S288c) (Baker's yeast).